Here is a 153-residue protein sequence, read N- to C-terminus: Large ribosomal subunit protein uL15 (153 aa).

Residues 1 to 42 form a disordered region; the sequence is MKLNTIKPGIGSAKPKRRVGRGIGSGLGKTCGRGHKGQKSRA. Residues 21–31 are compositionally biased toward gly residues; that stretch reads RGIGSGLGKTC.

This sequence belongs to the universal ribosomal protein uL15 family. In terms of assembly, part of the 50S ribosomal subunit.

In terms of biological role, binds to the 23S rRNA. The sequence is that of Large ribosomal subunit protein uL15 from Nitrosomonas europaea (strain ATCC 19718 / CIP 103999 / KCTC 2705 / NBRC 14298).